Reading from the N-terminus, the 330-residue chain is D-cysteine desulfhydrase (330 aa).

At K52 the chain carries N6-(pyridoxal phosphate)lysine.

This sequence belongs to the ACC deaminase/D-cysteine desulfhydrase family. In terms of assembly, homodimer. Pyridoxal 5'-phosphate is required as a cofactor.

It catalyses the reaction D-cysteine + H2O = hydrogen sulfide + pyruvate + NH4(+) + H(+). Functionally, catalyzes the alpha,beta-elimination reaction of D-cysteine and of several D-cysteine derivatives. It could be a defense mechanism against D-cysteine. The protein is D-cysteine desulfhydrase of Serratia proteamaculans (strain 568).